Consider the following 308-residue polypeptide: Transaldolase (308 aa).

Lysine 125 serves as the catalytic Schiff-base intermediate with substrate.

Belongs to the transaldolase family. Type 1 subfamily. In terms of assembly, homodimer.

The protein localises to the cytoplasm. It carries out the reaction D-sedoheptulose 7-phosphate + D-glyceraldehyde 3-phosphate = D-erythrose 4-phosphate + beta-D-fructose 6-phosphate. The protein operates within carbohydrate degradation; pentose phosphate pathway; D-glyceraldehyde 3-phosphate and beta-D-fructose 6-phosphate from D-ribose 5-phosphate and D-xylulose 5-phosphate (non-oxidative stage): step 2/3. Its function is as follows. Transaldolase is important for the balance of metabolites in the pentose-phosphate pathway. The protein is Transaldolase of Pseudomonas fluorescens (strain Pf0-1).